Here is a 177-residue protein sequence, read N- to C-terminus: ATP synthase subunit delta (177 aa).

This sequence belongs to the ATPase delta chain family. F-type ATPases have 2 components, F(1) - the catalytic core - and F(0) - the membrane proton channel. F(1) has five subunits: alpha(3), beta(3), gamma(1), delta(1), epsilon(1). F(0) has three main subunits: a(1), b(2) and c(10-14). The alpha and beta chains form an alternating ring which encloses part of the gamma chain. F(1) is attached to F(0) by a central stalk formed by the gamma and epsilon chains, while a peripheral stalk is formed by the delta and b chains.

The protein localises to the cell inner membrane. Its function is as follows. F(1)F(0) ATP synthase produces ATP from ADP in the presence of a proton or sodium gradient. F-type ATPases consist of two structural domains, F(1) containing the extramembraneous catalytic core and F(0) containing the membrane proton channel, linked together by a central stalk and a peripheral stalk. During catalysis, ATP synthesis in the catalytic domain of F(1) is coupled via a rotary mechanism of the central stalk subunits to proton translocation. Functionally, this protein is part of the stalk that links CF(0) to CF(1). It either transmits conformational changes from CF(0) to CF(1) or is implicated in proton conduction. This chain is ATP synthase subunit delta, found in Aliivibrio salmonicida (strain LFI1238) (Vibrio salmonicida (strain LFI1238)).